Reading from the N-terminus, the 626-residue chain is Chaperone protein DnaK (626 aa).

Threonine 175 bears the Phosphothreonine; by autocatalysis mark. Disordered regions lie at residues 469–488, 498–517, and 583–626; these read DKGT…GLPK, AEAH…TRNQ, and AQQG…KDNK. A compositionally biased stretch (basic and acidic residues) spans 498 to 516; the sequence is AEAHEAEDKKRKEDAETRN. A compositionally biased stretch (acidic residues) spans 609-626; it reads SDDDVVDAEVVDDDKDNK.

Belongs to the heat shock protein 70 family.

Its function is as follows. Acts as a chaperone. The sequence is that of Chaperone protein DnaK from Bifidobacterium adolescentis (strain ATCC 15703 / DSM 20083 / NCTC 11814 / E194a).